The sequence spans 122 residues: uncharacterized protein (122 aa).

Phosphothreonine is present on threonine 55. Residues serine 72, serine 86, serine 96, serine 112, and serine 118 each carry the phosphoserine modification.

It localises to the cytoplasm. This is an uncharacterized protein from Homo sapiens (Human).